The following is an 853-amino-acid chain: MKGDTRHLNGEEDAGGREDSILVNGACSDQSSDSPPILEAIRTPEIRGRRSSSRLSKREVSSLLSYTQDLTGDGDGEDGDGSDTPVMPKLFRETRTRSESPAVRTRNNNSVSSRERHRPSPRSTRGRQGRNHVDESPVEFPATRSLRRRATASAGTPWPSPPSSYLTIDLTDDTEDTHGTPQSSSTPYARLAQDSQQGGMESPQVEADSGDGDSSEYQDGKEFGIGDLVWGKIKGFSWWPAMVVSWKATSKRQAMSGMRWVQWFGDGKFSEVSADKLVALGLFSQHFNLATFNKLVSYRKAMYHALEKARVRAGKTFPSSPGDSLEDQLKPMLEWAHGGFKPTGIEGLKPNNTQPVVNKSKVRRAGSRKLESRKYENKTRRRTADDSATSDYCPAPKRLKTNCYNNGKDRGDEDQSREQMASDVANNKSSLEDGCLSCGRKNPVSFHPLFEGGLCQTCRDRFLELFYMYDDDGYQSYCTVCCEGRELLLCSNTSCCRCFCVECLEVLVGTGTAAEAKLQEPWSCYMCLPQRCHGVLRRRKDWNVRLQAFFTSDTGLEYEAPKLYPAIPAARRRPIRVLSLFDGIATGYLVLKELGIKVGKYVASEVCEESIAVGTVKHEGNIKYVNDVRNITKKNIEEWGPFDLVIGGSPCNDLSNVNPARKGLYEGTGRLFFEFYHLLNYSRPKEGDDRPFFWMFENVVAMKVGDKRDISRFLECNPVMIDAIKVSAAHRARYFWGNLPGMNRPVIASKNDKLELQDCLEYNRIAKLKKVQTITTKSNSIKQGKNQLFPVVMNGKEDVLWCTELERIFGFPVHYTDVSNMGRGARQKLLGRSWSVPVIRHLFAPLKDYFACE.

Positions 1–20 (MKGDTRHLNGEEDAGGREDS) are enriched in basic and acidic residues. The interval 1–218 (MKGDTRHLNG…SGDGDSSEYQ (218 aa)) is disordered. Positions 1–298 (MKGDTRHLNG…LATFNKLVSY (298 aa)) are interaction with DNMT1 and DNMT3A. Over residues 72–81 (GDGDGEDGDG) the composition is skewed to acidic residues. Phosphoserine is present on S82. K89 is covalently cross-linked (Glycyl lysine isopeptide (Lys-Gly) (interchain with G-Cter in SUMO2)). T96 carries the post-translational modification Phosphothreonine. Phosphoserine is present on residues S100 and S110. Residues 115-130 (ERHRPSPRSTRGRQGR) show a composition bias toward basic residues. A phosphoserine mark is found at S136, S195, S202, and S209. A compositionally biased stretch (polar residues) spans 179–199 (GTPQSSSTPYARLAQDSQQGG). Residues 225–283 (IGDLVWGKIKGFSWWPAMVVSWKATSKRQAMSGMRWVQWFGDGKFSEVSADKLVALGLF) enclose the PWWP domain. Residues 341-423 (KPTGIEGLKP…DQSREQMASD (83 aa)) form a disordered region. Basic and acidic residues-rich tracts occupy residues 368 to 385 (RKLESRKYENKTRRRTAD) and 407 to 417 (GKDRGDEDQSR). R410 bears the Citrulline mark. Positions 423–555 (DVANNKSSLE…LQAFFTSDTG (133 aa)) constitute an ADD domain. The GATA-type; atypical zinc-finger motif lies at 434–464 (GCLSCGRKNPVSFHPLFEGGLCQTCRDRFLE). Residues 435 to 527 (CLSCGRKNPV…LQEPWSCYMC (93 aa)) are interaction with the PRC2/EED-EZH2 complex. The segment at 475–531 (QSYCTVCCEGRELLLCSNTSCCRCFCVECLEVLVGTGTAAEAKLQEPWSCYMCLPQR) adopts a PHD-type; atypical zinc-finger fold. An SAM-dependent MTase C5-type domain is found at 575–853 (IRVLSLFDGI…APLKDYFACE (279 aa)). S-adenosyl-L-methionine-binding positions include 582-586 (DGIAT) and E605. K617 participates in a covalent cross-link: Glycyl lysine isopeptide (Lys-Gly) (interchain with G-Cter in SUMO2). 627-629 (DVR) provides a ligand contact to S-adenosyl-L-methionine. C651 is an active-site residue. 832–834 (RSW) is a binding site for S-adenosyl-L-methionine.

The protein belongs to the class I-like SAM-binding methyltransferase superfamily. C5-methyltransferase family. Interacts with BAZ2A/TIP5, SUV39H1 and CBX4. Interacts with UHRF1. Interacts with DNMT1 and DNMT3A, SETDB1, UBL1, UBE2I9 and ZHX1. Interacts with the PRC2/EED-EZH2 complex. In terms of processing, sumoylated. Post-translationally, citrullinated by PADI4. In terms of tissue distribution, ubiquitous; highly expressed in fetal liver, heart, kidney, placenta, and at lower levels in spleen, colon, brain, liver, small intestine, lung, peripheral blood mononuclear cells, and skeletal muscle. Isoform 1 is expressed in all tissues except brain, skeletal muscle and PBMC, 3 is ubiquitous, 4 is expressed in all tissues except brain, skeletal muscle, lung and prostate and 5 is detectable only in testis and at very low level in brain and prostate.

Its subcellular location is the nucleus. It carries out the reaction a 2'-deoxycytidine in DNA + S-adenosyl-L-methionine = a 5-methyl-2'-deoxycytidine in DNA + S-adenosyl-L-homocysteine + H(+). With respect to regulation, activated by binding to the regulatory factor DNMT3L. Functionally, required for genome-wide de novo methylation and is essential for the establishment of DNA methylation patterns during development. DNA methylation is coordinated with methylation of histones. May preferentially methylates nucleosomal DNA within the nucleosome core region. May function as transcriptional co-repressor by associating with CBX4 and independently of DNA methylation. Seems to be involved in gene silencing. In association with DNMT1 and via the recruitment of CTCFL/BORIS, involved in activation of BAG1 gene expression by modulating dimethylation of promoter histone H3 at H3K4 and H3K9. Isoforms 4 and 5 are probably not functional due to the deletion of two conserved methyltransferase motifs. Functions as a transcriptional corepressor by associating with ZHX1. Required for DUX4 silencing in somatic cells. The chain is DNA (cytosine-5)-methyltransferase 3B (DNMT3B) from Homo sapiens (Human).